Here is a 319-residue protein sequence, read N- to C-terminus: MAPTAAQIKSRARALGFHKVGIARADALDGEAAERLGGWLAAGYAGEMRWMHDPRRRDIQQVLPGVRSVICVALSYNTAQGEPAPGQARISRYALGRDYHKVLGKPLKELARWIEASDPGCRAVAYVDTGPVQEKAWAEAAGLGWIGKNACLITLEYGSWVFLGEILTTLDLEANDPHPNYCGTCTRCLSACPTAALVEPAVVDARKCLAYHTIENRAPELPEAIAEHQHGWVVGCDLCQTCCPFNLRAERWGRYSEVADFAPRDPWNEITLDQLADLSDAEFERWSEGSAIRRVKASGLRRNARSALGASGDSLAQAH.

D128 functions as the Proton donor in the catalytic mechanism. The 4Fe-4S ferredoxin-type domain occupies 173–202; it reads EANDPHPNYCGTCTRCLSACPTAALVEPAV. [4Fe-4S] cluster is bound by residues C182, C185, C188, C192, C208, C236, C239, and C243.

Belongs to the QueG family. In terms of assembly, monomer. Requires cob(II)alamin as cofactor. [4Fe-4S] cluster is required as a cofactor.

It localises to the cytoplasm. It carries out the reaction epoxyqueuosine(34) in tRNA + AH2 = queuosine(34) in tRNA + A + H2O. The protein operates within tRNA modification; tRNA-queuosine biosynthesis. Its function is as follows. Catalyzes the conversion of epoxyqueuosine (oQ) to queuosine (Q), which is a hypermodified base found in the wobble positions of tRNA(Asp), tRNA(Asn), tRNA(His) and tRNA(Tyr). The polypeptide is Epoxyqueuosine reductase (Gloeobacter violaceus (strain ATCC 29082 / PCC 7421)).